Reading from the N-terminus, the 189-residue chain is Ribosome maturation factor RimM (189 aa).

Positions 96 to 169 constitute a PRC barrel domain; that stretch reads EDEFYYADLE…TLLIDPLAAG (74 aa).

Belongs to the RimM family. In terms of assembly, binds ribosomal protein uS19.

The protein localises to the cytoplasm. Functionally, an accessory protein needed during the final step in the assembly of 30S ribosomal subunit, possibly for assembly of the head region. Essential for efficient processing of 16S rRNA. May be needed both before and after RbfA during the maturation of 16S rRNA. It has affinity for free ribosomal 30S subunits but not for 70S ribosomes. The polypeptide is Ribosome maturation factor RimM (Rhizobium johnstonii (strain DSM 114642 / LMG 32736 / 3841) (Rhizobium leguminosarum bv. viciae)).